The primary structure comprises 549 residues: Pleckstrin homology domain-containing family A member 8 (549 aa).

The PH domain maps to Met1–Ala93. Disordered regions lie at residues Asn180–Ser245 and Gln257–Gln312. Positions Lys203–Leu219 are enriched in basic and acidic residues. Acidic residues predominate over residues Glu276–Glu288. Residues Glu299 to Gln309 show a composition bias toward polar residues.

Its subcellular location is the cytoplasm. The protein localises to the golgi apparatus. It localises to the trans-Golgi network membrane. It is found in the membrane. Functionally, cargo transport protein that is required for apical transport from the trans-Golgi network (TGN) to the plasma membrane. This chain is Pleckstrin homology domain-containing family A member 8 (plekha8), found in Danio rerio (Zebrafish).